The sequence spans 473 residues: Ribulose bisphosphate carboxylase large chain (473 aa).

Substrate is bound by residues N116 and T166. K168 functions as the Proton acceptor in the catalytic mechanism. Position 170 (K170) interacts with substrate. Positions 194, 196, and 197 each coordinate Mg(2+). The residue at position 194 (K194) is an N6-carboxylysine. The active-site Proton acceptor is the H287. Positions 288, 320, and 372 each coordinate substrate.

Belongs to the RuBisCO large chain family. Type I subfamily. As to quaternary structure, heterohexadecamer of 8 large chains and 8 small chains. Requires Mg(2+) as cofactor.

It carries out the reaction 2 (2R)-3-phosphoglycerate + 2 H(+) = D-ribulose 1,5-bisphosphate + CO2 + H2O. The enzyme catalyses D-ribulose 1,5-bisphosphate + O2 = 2-phosphoglycolate + (2R)-3-phosphoglycerate + 2 H(+). RuBisCO catalyzes two reactions: the carboxylation of D-ribulose 1,5-bisphosphate, the primary event in carbon dioxide fixation, as well as the oxidative fragmentation of the pentose substrate. Both reactions occur simultaneously and in competition at the same active site. In Hydrogenophaga pseudoflava (Pseudomonas carboxydoflava), this protein is Ribulose bisphosphate carboxylase large chain.